The primary structure comprises 149 residues: Basic phospholipase A2 homolog MitTx-beta (149 aa).

A signal peptide spans 1 to 30 (MDKMNPAHLLVLAAVCVSLLGASSIPPQAL). 7 disulfides stabilise this stretch: C41/C100, C55/C148, C57/C73, C72/C130, C79/C123, C89/C116, and C109/C121.

The protein belongs to the phospholipase A2 family. Group I subfamily. K49 sub-subfamily. In terms of assembly, heterodimer of an alpha (Kunitz-type) and a beta (phospholipase A2 homolog) chains; non-covalently-linked. Expressed by the venom gland.

It localises to the secreted. Its function is as follows. Heterodimer: MitTx, a heteromeric complex between Kunitz- and phospholipase-A2-like proteins, potently, persistently and selectively activates rat and chicken acid-sensing ion channel ASIC1. Both alternatively spliced rat isoforms ASIC1a and ASIC1b are activated, with a higher potency for ASIC1a (EC(50)=9.4 nM) vs ASIC1b (EC(50)=23 nM). The rat ASIC3 subtype is also sensitive to the heterodimer, but with a lower potency (EC(50)=830 nM). On rat ASIC2a, the toxin shows a very weak activation, but produces a remarkable potentiation (&gt;100-fold) of protons when the extracellular pH drops below neutrality. Moderate and weak activations are also observed on the heterotrimers Asic1a-Asic2a and Asic1a-Asic3 (expressed in CHO cells), respectively. The binding sites of the beta subunit of MitTx and the spider psalmotoxin-1 toxin overlap, explaining why these toxins are mutually exclusive. In vivo, the heterodimer elicits robust pain-related behavior in mice by activation of ASIC1 channels on capsaicin-sensitive nerve fibers. In terms of biological role, monomer: does not have phospholipase A2 activity but may maintain some lipid-binding character from its PLA2 lineage, which could aid in effecting neuronal depolarization. In Micrurus tener tener (Texas coral snake), this protein is Basic phospholipase A2 homolog MitTx-beta.